The primary structure comprises 550 residues: Acidic amino acid decarboxylase GADL1 (550 aa).

Lys362 carries the N6-(pyridoxal phosphate)lysine modification.

It belongs to the group II decarboxylase family. As to quaternary structure, homodimer. Requires pyridoxal 5'-phosphate as cofactor. As to expression, expressed in skeletal muscles and kidney (at protein level). Expressed in skeletal muscle and weakly in brain. Not expressed in liver or kidney. Expressed in brain, olfactory bulb, liver, muscle and kidney with the highest expression in olfactory bulb and almost not detected in liver (at protein level).

It carries out the reaction L-aspartate + H(+) = beta-alanine + CO2. The enzyme catalyses 3-sulfino-L-alanine + H(+) = hypotaurine + CO2. It catalyses the reaction L-cysteate + H(+) = taurine + CO2. Its activity is regulated as follows. Activated weakly by 0.2-0.4 mM Li(+). Inhibited by bis-carboxymethyl-trithiocarbonate, ethylxanthogenacetic acid and 2,5-disulfoaniline. In terms of biological role, catalyzes the decarboxylation of L-aspartate, 3-sulfino-L-alanine (cysteine sulfinic acid), and L-cysteate to beta-alanine, hypotaurine and taurine, respectively. The preferred substrate is L-aspartate. Does not exhibit any decarboxylation activity toward glutamate. This Mus musculus (Mouse) protein is Acidic amino acid decarboxylase GADL1.